Consider the following 435-residue polypeptide: Maltodextrin transport system permease protein MdxF (435 aa).

Transmembrane regions (helical) follow at residues 35-55 (LLFL…GIQA), 73-93 (FMLI…MFYI), 136-156 (AYIM…FVAL), 199-219 (VIWT…TALF), 234-254 (IFLF…SNMF), 293-313 (LIMI…TGVL), 337-357 (HITF…QYTF), and 403-423 (VAAA…LIAF). The 228-residue stretch at 195–422 (LGWTVIWTIC…FIVIGISLIA (228 aa)) folds into the ABC transmembrane type-1 domain.

This sequence belongs to the binding-protein-dependent transport system permease family. MalFG subfamily. The complex is composed of two ATP-binding proteins (MsmX), two transmembrane proteins (MdxF and MdxG) and a solute-binding protein (MdxE).

The protein resides in the cell membrane. Its function is as follows. Part of the ABC transporter complex involved in maltodextrin import. Probably responsible for the translocation of the substrate across the membrane. The chain is Maltodextrin transport system permease protein MdxF (mdxF) from Bacillus subtilis (strain 168).